The chain runs to 592 residues: Aspartate--tRNA(Asp/Asn) ligase (592 aa).

E182 provides a ligand contact to L-aspartate. The segment at 206–209 (QIFK) is aspartate. R228 lines the L-aspartate pocket. ATP-binding positions include 228–230 (RDE) and Q237. H455 serves as a coordination point for L-aspartate. E489 serves as a coordination point for ATP. R496 is a binding site for L-aspartate. An ATP-binding site is contributed by 541–544 (GLDR).

The protein belongs to the class-II aminoacyl-tRNA synthetase family. Type 1 subfamily. In terms of assembly, homodimer.

The protein resides in the cytoplasm. The catalysed reaction is tRNA(Asx) + L-aspartate + ATP = L-aspartyl-tRNA(Asx) + AMP + diphosphate. Aspartyl-tRNA synthetase with relaxed tRNA specificity since it is able to aspartylate not only its cognate tRNA(Asp) but also tRNA(Asn). Reaction proceeds in two steps: L-aspartate is first activated by ATP to form Asp-AMP and then transferred to the acceptor end of tRNA(Asp/Asn). In Thermoanaerobacter pseudethanolicus (strain ATCC 33223 / 39E) (Clostridium thermohydrosulfuricum), this protein is Aspartate--tRNA(Asp/Asn) ligase.